The sequence spans 366 residues: Beta sliding clamp (366 aa).

This sequence belongs to the beta sliding clamp family. In terms of assembly, forms a ring-shaped head-to-tail homodimer around DNA which binds and tethers DNA polymerases and other proteins to the DNA. The DNA replisome complex has a single clamp-loading complex (3 tau and 1 each of delta, delta', psi and chi subunits) which binds 3 Pol III cores (1 core on the leading strand and 2 on the lagging strand) each with a beta sliding clamp dimer. Additional proteins in the replisome are other copies of gamma, psi and chi, Ssb, DNA helicase and RNA primase.

The protein resides in the cytoplasm. Confers DNA tethering and processivity to DNA polymerases and other proteins. Acts as a clamp, forming a ring around DNA (a reaction catalyzed by the clamp-loading complex) which diffuses in an ATP-independent manner freely and bidirectionally along dsDNA. Initially characterized for its ability to contact the catalytic subunit of DNA polymerase III (Pol III), a complex, multichain enzyme responsible for most of the replicative synthesis in bacteria; Pol III exhibits 3'-5' exonuclease proofreading activity. The beta chain is required for initiation of replication as well as for processivity of DNA replication. The sequence is that of Beta sliding clamp (dnaN) from Chlamydia pneumoniae (Chlamydophila pneumoniae).